The chain runs to 396 residues: Gap junction gamma-1 protein (396 aa).

Topologically, residues 1–22 are cytoplasmic; sequence MSWSFLTRLLEEIHNHSTFVGK. A helical membrane pass occupies residues 23-45; the sequence is IWLTVLIVFRIVLTAVGGESIYY. The Extracellular portion of the chain corresponds to 46 to 75; it reads DEQSKFVCNTEQPGCENVCYDAFAPLSHVR. Residues 76–95 form a helical membrane-spanning segment; that stretch reads FWVFQIILVATPSVMYLGYA. Residues 96 to 175 lie on the Cytoplasmic side of the membrane; the sequence is IHKIAKMEHG…RRIREDGLMK (80 aa). Positions 145-165 are disordered; it reads ELESDKENKEQSQPKPKHDGR. A compositionally biased stretch (basic and acidic residues) spans 147–156; sequence ESDKENKEQS. The chain crosses the membrane as a helical span at residues 176–198; the sequence is IYVLQLLARTVFEVGFLIGQYFL. The Extracellular portion of the chain corresponds to 199 to 228; the sequence is YGFQVHPFYVCSRLPCPHKIDCFISRPTEK. A helical transmembrane segment spans residues 229-248; sequence TIFLLIMYGVTGLCLLLNIW. The Cytoplasmic portion of the chain corresponds to 249 to 396; sequence EMLHLGFGTI…SGDGKTSVWI (148 aa). The segment at 353–396 is disordered; that stretch reads VQAYSHQNNPHGPREKKAKVGSKAGSNKSTASSKSGDGKTSVWI. The span at 376-387 shows a compositional bias: polar residues; the sequence is AGSNKSTASSKS.

The protein belongs to the connexin family. Gamma-type subfamily. As to quaternary structure, a connexon is composed of a hexamer of connexins. Interacts with CNST.

The protein resides in the cell membrane. The protein localises to the cell junction. Its subcellular location is the gap junction. Functionally, one gap junction consists of a cluster of closely packed pairs of transmembrane channels, the connexons, through which materials of low MW diffuse from one cell to a neighboring cell. This is Gap junction gamma-1 protein (GJC1) from Homo sapiens (Human).